The chain runs to 340 residues: S-adenosylmethionine:tRNA ribosyltransferase-isomerase (340 aa).

It belongs to the QueA family. Monomer.

It localises to the cytoplasm. It catalyses the reaction 7-aminomethyl-7-carbaguanosine(34) in tRNA + S-adenosyl-L-methionine = epoxyqueuosine(34) in tRNA + adenine + L-methionine + 2 H(+). The protein operates within tRNA modification; tRNA-queuosine biosynthesis. Functionally, transfers and isomerizes the ribose moiety from AdoMet to the 7-aminomethyl group of 7-deazaguanine (preQ1-tRNA) to give epoxyqueuosine (oQ-tRNA). The sequence is that of S-adenosylmethionine:tRNA ribosyltransferase-isomerase from Chlorobaculum parvum (strain DSM 263 / NCIMB 8327) (Chlorobium vibrioforme subsp. thiosulfatophilum).